A 658-amino-acid polypeptide reads, in one-letter code: Glycogen debranching enzyme (658 aa).

Asp-336 functions as the Nucleophile in the catalytic mechanism. Glu-371 acts as the Proton donor in catalysis.

The protein belongs to the glycosyl hydrolase 13 family.

It carries out the reaction Hydrolysis of (1-&gt;6)-alpha-D-glucosidic linkages to branches with degrees of polymerization of three or four glucose residues in limit dextrin.. It functions in the pathway glycan degradation; glycogen degradation. Its function is as follows. Removes maltotriose and maltotetraose chains that are attached by 1,6-alpha-linkage to the limit dextrin main chain, generating a debranched limit dextrin. The chain is Glycogen debranching enzyme from Klebsiella pneumoniae subsp. pneumoniae (strain ATCC 700721 / MGH 78578).